We begin with the raw amino-acid sequence, 375 residues long: Phosphoglucan phosphatase DSP4, amyloplastic (375 aa).

The transit peptide at methionine 1–arginine 42 directs the protein to the amyloplast. The interval isoleucine 49 to tyrosine 71 is disordered. The segment covering glycine 51–alanine 61 has biased composition (polar residues). The region spanning asparagine 92–lysine 249 is the Tyrosine-protein phosphatase domain. Cysteine 193 (phosphocysteine intermediate) is an active-site residue. Threonine 194 to arginine 199 lines the substrate pocket. The interval leucine 254–valine 330 is polysaccharide binding.

Expressed in phloem parenchyma of 16-24 week old seedlings and 2 year old trees (at protein level). Expressed in leaves of 16-24 week old seedlings and 2 year old trees.

It is found in the plastid. The protein resides in the amyloplast. It localises to the nucleus. Functionally, starch granule-associated phosphoglucan phosphatase involved in the control of starch accumulation. Acts as a major regulator of the initial steps of starch degradation at the granule surface. Functions during the day by dephosphorylating the night-accumulated phospho-oligosaccharides. Can release phosphate from both the C6 and the C3 positions. The polypeptide is Phosphoglucan phosphatase DSP4, amyloplastic (Castanea sativa (Sweet chestnut)).